We begin with the raw amino-acid sequence, 104 residues long: MKRISFKVEDELARNLDKYSMQNHLTRSEAIRQILREKLSIMQIPTDKGKVVSGIIINDEIYECKYCHTRYLSHTGIVYHLEREHNIKKPFSPHIIKIVGDKNE.

A C2H2-type zinc finger spans residues 62 to 85 (YECKYCHTRYLSHTGIVYHLEREH).

The protein is Putative zinc finger protein ORF104b of Acidianus sp. F28 (AFV-2).